Consider the following 124-residue polypeptide: Fluoride-specific ion channel FluC (124 aa).

4 helical membrane-spanning segments follow: residues 4–24, 35–55, 60–80, and 102–122; these read LLLV…ISIF, FGTL…YALG, ISPE…TTFS, and VVLN…LVFS. Residues G74 and T77 each contribute to the Na(+) site.

Belongs to the fluoride channel Fluc/FEX (TC 1.A.43) family.

The protein localises to the cell inner membrane. The catalysed reaction is fluoride(in) = fluoride(out). With respect to regulation, na(+) is not transported, but it plays an essential structural role and its presence is essential for fluoride channel function. Its function is as follows. Fluoride-specific ion channel. Important for reducing fluoride concentration in the cell, thus reducing its toxicity. This Shewanella sp. (strain ANA-3) protein is Fluoride-specific ion channel FluC.